Here is a 252-residue protein sequence, read N- to C-terminus: Probable 6-phosphogluconolactonase 5 (252 aa).

The protein belongs to the glucosamine/galactosamine-6-phosphate isomerase family. 6-phosphogluconolactonase subfamily.

The protein resides in the cytoplasm. It localises to the cytosol. It carries out the reaction 6-phospho-D-glucono-1,5-lactone + H2O = 6-phospho-D-gluconate + H(+). The protein operates within carbohydrate degradation; pentose phosphate pathway; D-ribulose 5-phosphate from D-glucose 6-phosphate (oxidative stage): step 2/3. Functionally, catalyzes the hydrolysis of 6-phosphogluconolactone to 6-phosphogluconate. The protein is Probable 6-phosphogluconolactonase 5 of Arabidopsis thaliana (Mouse-ear cress).